A 279-amino-acid chain; its full sequence is MPYPRKRFGQHWLKDPAVHEAIVRAAQLPPPQRDPAWVLEIGPGTGQLTQRLLAQGVHVVAVEIDRDLCRLLQKRFADQPRFHLVEGDFLRLPLPPQPRLLVANIPYNLTGPILEKVLGSPAQPVRQFERIVLMVQKELAERLQAGPGSKAYGALSVRVRYLAECELICRVPPSAFRPPPQVESAVVRLTPRPAPTPARDPRWFSQLVCQGFSARRKQLVNALGGLVDRQTVAAALAQLRLSPTARAEELDLPDWLALSDLLLEQTPRMAAVSGEGKPR.

S-adenosyl-L-methionine is bound by residues His11, Leu13, Gly42, Glu63, Asp88, and Asn104.

This sequence belongs to the class I-like SAM-binding methyltransferase superfamily. rRNA adenine N(6)-methyltransferase family. RsmA subfamily.

It is found in the cytoplasm. The enzyme catalyses adenosine(1518)/adenosine(1519) in 16S rRNA + 4 S-adenosyl-L-methionine = N(6)-dimethyladenosine(1518)/N(6)-dimethyladenosine(1519) in 16S rRNA + 4 S-adenosyl-L-homocysteine + 4 H(+). Specifically dimethylates two adjacent adenosines (A1518 and A1519) in the loop of a conserved hairpin near the 3'-end of 16S rRNA in the 30S particle. May play a critical role in biogenesis of 30S subunits. This is Ribosomal RNA small subunit methyltransferase A from Synechococcus sp. (strain JA-3-3Ab) (Cyanobacteria bacterium Yellowstone A-Prime).